A 249-amino-acid polypeptide reads, in one-letter code: Probable transcriptional regulatory protein MXAN_4974 (249 aa).

The protein belongs to the TACO1 family.

Its subcellular location is the cytoplasm. This is Probable transcriptional regulatory protein MXAN_4974 from Myxococcus xanthus (strain DK1622).